Here is a 426-residue protein sequence, read N- to C-terminus: Glutamyl-tRNA(Gln) amidotransferase subunit D (426 aa).

An Asparaginase/glutaminase domain is found at 82 to 413 (KNISILSTGG…KDAKKLICKN (332 aa)). Catalysis depends on residues Thr-92, Thr-168, Asp-169, and Lys-245.

It belongs to the asparaginase 1 family. GatD subfamily. In terms of assembly, heterodimer of GatD and GatE.

It carries out the reaction L-glutamyl-tRNA(Gln) + L-glutamine + ATP + H2O = L-glutaminyl-tRNA(Gln) + L-glutamate + ADP + phosphate + H(+). Its function is as follows. Allows the formation of correctly charged Gln-tRNA(Gln) through the transamidation of misacylated Glu-tRNA(Gln) in organisms which lack glutaminyl-tRNA synthetase. The reaction takes place in the presence of glutamine and ATP through an activated gamma-phospho-Glu-tRNA(Gln). The GatDE system is specific for glutamate and does not act on aspartate. This Methanococcus vannielii (strain ATCC 35089 / DSM 1224 / JCM 13029 / OCM 148 / SB) protein is Glutamyl-tRNA(Gln) amidotransferase subunit D.